The chain runs to 275 residues: 2,3,4,5-tetrahydropyridine-2,6-dicarboxylate N-succinyltransferase (275 aa).

Substrate-binding residues include Arg106 and Asp143.

The protein belongs to the transferase hexapeptide repeat family. In terms of assembly, homotrimer.

It localises to the cytoplasm. The catalysed reaction is (S)-2,3,4,5-tetrahydrodipicolinate + succinyl-CoA + H2O = (S)-2-succinylamino-6-oxoheptanedioate + CoA. Its pathway is amino-acid biosynthesis; L-lysine biosynthesis via DAP pathway; LL-2,6-diaminopimelate from (S)-tetrahydrodipicolinate (succinylase route): step 1/3. In Cupriavidus necator (strain ATCC 17699 / DSM 428 / KCTC 22496 / NCIMB 10442 / H16 / Stanier 337) (Ralstonia eutropha), this protein is 2,3,4,5-tetrahydropyridine-2,6-dicarboxylate N-succinyltransferase.